We begin with the raw amino-acid sequence, 137 residues long: Large ribosomal subunit protein uL16 (137 aa).

Belongs to the universal ribosomal protein uL16 family. Part of the 50S ribosomal subunit.

Its function is as follows. Binds 23S rRNA and is also seen to make contacts with the A and possibly P site tRNAs. This is Large ribosomal subunit protein uL16 from Brucella abortus (strain S19).